Reading from the N-terminus, the 395-residue chain is Calreticulin (395 aa).

An N-terminal signal peptide occupies residues 1–15; sequence MKSLCLLAIVAVVSA. Cys101 and Cys133 are joined by a disulfide. 4 residues coordinate an alpha-D-glucoside: Tyr105, Lys107, Tyr124, and Asp131. Repeat copies occupy residues 186 to 197, 205 to 216, 222 to 233, 239 to 250, 254 to 264, 268 to 278, and 282 to 292. The 4 X approximate repeats stretch occupies residues 186 to 250; sequence AQTGSLEEDW…DAKKPEDWDD (65 aa). The P-domain stretch occupies residues 193 to 301; it reads EDWDLLPAKK…PEYTPDDELY (109 aa). Positions 202 to 212 are enriched in basic and acidic residues; sequence KIKDPDAKKPE. Positions 202-255 are disordered; that stretch reads KIKDPDAKKPEDWDEREYIDDAEDAKPEDWEKPEHIPDPDAKKPEDWDDEMDGE. The segment covering 213–224 has biased composition (acidic residues); it reads DWDEREYIDDAE. Residues 225–246 show a composition bias toward basic and acidic residues; it reads DAKPEDWEKPEHIPDPDAKKPE. The segment at 254–292 is 3 X approximate repeats; it reads GEWEPPMIDNPEYKGEWKPKQIKNPAYKGKWIHPEIENP. The interval 302 to 395 is C-domain; the sequence is SYESWGAIGF…KEEEEGHDEL (94 aa). Residue Asp312 participates in an alpha-D-glucoside binding. Basic and acidic residues predominate over residues 340-380; it reads ETFDKLKTVEKEKKEKADEETRKAEEEARKKAEEEKEAKKD. Residues 340-395 form a disordered region; sequence ETFDKLKTVEKEKKEKADEETRKAEEEARKKAEEEKEAKKDDDEEEKEEEEGHDEL. The segment covering 381 to 395 has biased composition (acidic residues); that stretch reads DDEEEKEEEEGHDEL. The Prevents secretion from ER signature appears at 392–395; the sequence is HDEL.

It belongs to the calreticulin family. In terms of processing, cleaved by caspase ced-3 in vitro.

The protein resides in the endoplasmic reticulum lumen. In terms of biological role, molecular calcium-binding chaperone promoting folding, oligomeric assembly and quality control in the endoplasmic reticulum (ER) via the calreticulin/calnexin cycle. This lectin may interact transiently with almost all of the monoglucosylated glycoproteins that are synthesized in the ER. Probably by controlling the folding of extracellular matrix protein unc-52/Perlecan, may play a role in the formation of fibrous organelles, a hemidesmosome-like structure attaching muscles to the epidermis. Protects dopaminergic neurons against oxidative stress-induced neurodegeneration. May play a role in protection against ER stress. Plays a role in modulating lifespan, acting by influencing ER calcium homeostasis. The sequence is that of Calreticulin (crt-1) from Caenorhabditis elegans.